Consider the following 300-residue polypeptide: ETS homologous factor (300 aa).

One can recognise a PNT domain in the interval 29 to 115 (STCNVSSGFF…SNLQHLKWNG (87 aa)). Residues 183-202 (ESPDMKKEQDPPAKCHTKKH) form a disordered region. Residues 185 to 195 (PDMKKEQDPPA) show a composition bias toward basic and acidic residues. Residues 207-289 (THLWEFIRDI…DGRRLVYKFG (83 aa)) constitute a DNA-binding region (ETS).

Belongs to the ETS family.

It localises to the nucleus. Its function is as follows. Transcriptional activator that may play a role in regulating epithelial cell differentiation and proliferation. May act as a repressor for a specific subset of ETS/AP-1-responsive genes, and as a modulator of the nuclear response to mitogen-activated protein kinase signaling cascades. Binds to DNA sequences containing the consensus nucleotide core sequence GGAA. Involved in regulation of TNFRSF10B/DR5 expression through Ets-binding sequences on the TNFRSF10B/DR5 promoter. This chain is ETS homologous factor (EHF), found in Pan paniscus (Pygmy chimpanzee).